The chain runs to 355 residues: Syntaxin-5 (355 aa).

Residues 1–333 (MIPRKRYGSK…KYFQSVTSNR (333 aa)) are Cytoplasmic-facing. Positions 245–247 (IDM) match the IxM motif; signal for cargo packaging into COPII-coated vesicles motif. Residues 263–325 (DSYIQSRADT…EAAHSEILKY (63 aa)) enclose the t-SNARE coiled-coil homology domain. A coiled-coil region spans residues 287–318 (FQQLAHMVKEQEETIQRIDENVLGAQLDVEAA). Residues 334-354 (WLMVKIFLILIVFFIIFVVFL) form a helical; Anchor for type IV membrane protein membrane-spanning segment. Residue alanine 355 is a topological domain, vesicular.

This sequence belongs to the syntaxin family. In terms of assembly, part of a ternary complex containing STX5A, NSFL1C and VCP. Part of a unique SNARE complex composed of the Golgi SNAREs GOSR1, GOSR2, YKT6 and VTI1A. Component of a SNARE complex consisting of STX5, YKT6, GOSR1 and BET1L. Interacts with BET1L. Interacts with BET1. Interacts with COG4. Interacts with GM130/GOLGA2. Interacts (via IxM motif) with SEC24C and SEC24D; mediates STX5 packaging into COPII-coated vesicles. Interacts with VLDLR; this interaction mediates VLDLR translocation from the endoplasmic reticulum to the plasma membrane.

The protein resides in the endoplasmic reticulum-Golgi intermediate compartment membrane. Its subcellular location is the golgi apparatus membrane. In terms of biological role, mediates endoplasmic reticulum to Golgi transport. Together with p115/USO1 and GM130/GOLGA2, involved in vesicle tethering and fusion at the cis-Golgi membrane to maintain the stacked and inter-connected structure of the Golgi apparatus. Functionally, required for Golgi to endoplasmic reticulum retrogade transport, and for intra-Golgi transport. The sequence is that of Syntaxin-5 (Stx5) from Mus musculus (Mouse).